A 212-amino-acid polypeptide reads, in one-letter code: Eukaryotic translation initiation factor 4E-4 (212 aa).

Cys143 and Cys147 are oxidised to a cystine.

The protein belongs to the eukaryotic initiation factor 4E family. As to quaternary structure, eIF4F is a multi-subunit complex, the composition of which varies with external and internal environmental conditions. It is composed of at least eIF4A, eIF4E and eIF4G. eIF4E is also known to interact with other partners. As to expression, enriched in somatic cells.

In terms of biological role, recognizes and binds the 7-methylguanosine-containing mRNA cap during an early step in the initiation of protein synthesis and facilitates ribosome binding by inducing the unwinding of the mRNAs secondary structures. All 5 eIF4E proteins bind monomethyl cap structures. Only ife-1, ife-2 and ife-5 bind trimethyl cap structures which result from trans-splicing. Translation of trimethyl cap structure mRNAs may be regulated by intracellular redox state; disulfide bonds change the width and depth of the cap-binding cavity determining selectivity to mRNA caps. In Caenorhabditis elegans, this protein is Eukaryotic translation initiation factor 4E-4 (ife-4).